The chain runs to 1029 residues: Multiple C2 domain and transmembrane region protein 6 (1029 aa).

Residues 1–111 enclose the C2 1 domain; that stretch reads MNKLVVEIVD…SGVQRYPLDK (111 aa). The segment at 187 to 224 is disordered; that stretch reads TKKKEKESRTFHSIGAHAGGGGGAPPMSQAKQAYPPPP. 3 consecutive C2 domains span residues 277–398, 437–562, and 605–727; these read RSSG…PQWY, RVSH…PRWF, and FSSD…THFY. Ca(2+) contacts are provided by Asp310, Asp316, Asp363, Asp365, and Asp371. A run of 2 helical transmembrane segments spans residues 864 to 884 and 976 to 996; these read LILV…LFVI and FALI…AIII.

Belongs to the MCTP family. Ca(2+) serves as cofactor. Expressed in the vascular tissues of cotyledons and rosette leaves. Accumulates in roots caps and shoot apical meristems (SAMs). Observed in flowers.

Its subcellular location is the cell membrane. It is found in the cytoplasm. The protein localises to the endosome membrane. In terms of biological role, regulates flowering time under long days. May function as a signaling molecule by regulating the trafficking of other regulators. The protein is Multiple C2 domain and transmembrane region protein 6 of Arabidopsis thaliana (Mouse-ear cress).